The following is a 248-amino-acid chain: Deoxyribose-phosphate aldolase (248 aa).

Asp-106 serves as the catalytic Proton donor/acceptor. Residue Lys-168 is the Schiff-base intermediate with acetaldehyde of the active site. Lys-197 acts as the Proton donor/acceptor in catalysis.

It belongs to the DeoC/FbaB aldolase family. DeoC type 1 subfamily.

The protein resides in the cytoplasm. The enzyme catalyses 2-deoxy-D-ribose 5-phosphate = D-glyceraldehyde 3-phosphate + acetaldehyde. Its pathway is carbohydrate degradation; 2-deoxy-D-ribose 1-phosphate degradation; D-glyceraldehyde 3-phosphate and acetaldehyde from 2-deoxy-alpha-D-ribose 1-phosphate: step 2/2. Functionally, catalyzes a reversible aldol reaction between acetaldehyde and D-glyceraldehyde 3-phosphate to generate 2-deoxy-D-ribose 5-phosphate. The chain is Deoxyribose-phosphate aldolase from Sinorhizobium medicae (strain WSM419) (Ensifer medicae).